Here is a 551-residue protein sequence, read N- to C-terminus: Cu(2+) suppressing and bleomycin sensitive protein 1 (551 aa).

Coiled coils occupy residues 174-213 and 249-300; these read REID…EEID and NSLL…DSGK. The interval 513-551 is disordered; sequence EEKAQNSTSSDGSDDDDNGESGIDSNSNDSEPESEYQQE. Residues 532–541 show a composition bias toward low complexity; it reads ESGIDSNSND. Residues 542-551 show a composition bias toward acidic residues; the sequence is SEPESEYQQE.

The protein belongs to the CUB1 family. In terms of assembly, monomer. Phosphorylated by PKA in vitro.

It localises to the cytoplasm. The protein localises to the nucleus. In terms of biological role, involved in bleomycin tolerance with links to DNA repair and/or proteasome function. The chain is Cu(2+) suppressing and bleomycin sensitive protein 1 (CUB1) from Saccharomyces cerevisiae (strain ATCC 204508 / S288c) (Baker's yeast).